Here is a 395-residue protein sequence, read N- to C-terminus: Elongation factor Tu (395 aa).

The 196-residue stretch at 10–205 (KPHVNIGTIG…CDTWIPLPPR (196 aa)) folds into the tr-type G domain. The segment at 19–26 (GHVDHGKT) is G1. A GTP-binding site is contributed by 19 to 26 (GHVDHGKT). Threonine 26 lines the Mg(2+) pocket. Residues 60–64 (GITIN) are G2. A G3 region spans residues 81-84 (DCPG). GTP-binding positions include 81–85 (DCPGH) and 136–139 (NKCD). Residues 136–139 (NKCD) are G4. The G5 stretch occupies residues 174-176 (SAL).

It belongs to the TRAFAC class translation factor GTPase superfamily. Classic translation factor GTPase family. EF-Tu/EF-1A subfamily. Monomer.

It is found in the cytoplasm. It catalyses the reaction GTP + H2O = GDP + phosphate + H(+). GTP hydrolase that promotes the GTP-dependent binding of aminoacyl-tRNA to the A-site of ribosomes during protein biosynthesis. The polypeptide is Elongation factor Tu (Parabacteroides distasonis (strain ATCC 8503 / DSM 20701 / CIP 104284 / JCM 5825 / NCTC 11152)).